The primary structure comprises 126 residues: uncharacterized protein (126 aa).

This is an uncharacterized protein from Invertebrate iridescent virus 6 (IIV-6).